We begin with the raw amino-acid sequence, 337 residues long: Heme A synthase (337 aa).

Helical transmembrane passes span 6–26 (ITKWLCISCIMVIATIVIGGI), 87–107 (FIHRLLGRITALIYIVPLIYF), 119–139 (LPYIIALLLFCIQGFIGWYMV), 154–174 (LAFHLIIAVIIYHILFYQLIK), and 192–212 (LIFSGIAITVVYVQIFLGALV). His256 contacts heme. The next 3 helical transmembrane spans lie at 258–278 (LVGYSVFLVVVVLIICLLKIE), 285–305 (IAYFLMIVLFMQVSTGIITLL), and 308–328 (VPIIIASIHQLFAIILLSIII). Residue His316 participates in heme binding.

It belongs to the COX15/CtaA family. Type 2 subfamily. As to quaternary structure, interacts with CtaB. Heme b is required as a cofactor.

It localises to the cell membrane. It catalyses the reaction Fe(II)-heme o + 2 A + H2O = Fe(II)-heme a + 2 AH2. The protein operates within porphyrin-containing compound metabolism; heme A biosynthesis; heme A from heme O: step 1/1. In terms of biological role, catalyzes the conversion of heme O to heme A by two successive hydroxylations of the methyl group at C8. The first hydroxylation forms heme I, the second hydroxylation results in an unstable dihydroxymethyl group, which spontaneously dehydrates, resulting in the formyl group of heme A. This is Heme A synthase from Rickettsia africae (strain ESF-5).